The chain runs to 496 residues: Isocitrate dehydrogenase [NADP] (496 aa).

NADP(+)-binding residues include Leu88 and Thr90. Residues Ser98, Asn100, Arg104, Arg114, and Arg137 each contribute to the D-threo-isocitrate site. Residues Asn193, Gln229, and Lys232 each contribute to the NADP(+) site. Residue Asp248 participates in Mg(2+) binding. NADP(+) is bound by residues Glu277, Gly281, Ser282, Ala283, Lys285, Tyr286, and Asn293.

This sequence belongs to the isocitrate and isopropylmalate dehydrogenases family. As to quaternary structure, homodimer. It depends on Mg(2+) as a cofactor. Requires Mn(2+) as cofactor.

It catalyses the reaction D-threo-isocitrate + NADP(+) = 2-oxoglutarate + CO2 + NADPH. Catalyzes the oxidative decarboxylation of isocitrate to 2-oxoglutarate and carbon dioxide with the concomitant reduction of NADP(+). The sequence is that of Isocitrate dehydrogenase [NADP] (icd) from Thermus thermophilus (strain ATCC 27634 / DSM 579 / HB8).